A 156-amino-acid polypeptide reads, in one-letter code: Small ribosomal subunit protein uS7 (156 aa).

It belongs to the universal ribosomal protein uS7 family. As to quaternary structure, part of the 30S ribosomal subunit. Contacts proteins S9 and S11.

Its function is as follows. One of the primary rRNA binding proteins, it binds directly to 16S rRNA where it nucleates assembly of the head domain of the 30S subunit. Is located at the subunit interface close to the decoding center, probably blocks exit of the E-site tRNA. The polypeptide is Small ribosomal subunit protein uS7 (Clavibacter michiganensis subsp. michiganensis (strain NCPPB 382)).